A 281-amino-acid chain; its full sequence is Ribosomal RNA large subunit methyltransferase J (281 aa).

Residues His-19, His-42, Ser-101, Glu-119, 144 to 145 (NG), and Asp-165 each bind S-adenosyl-L-methionine. Catalysis depends on Asp-165, which acts as the Proton acceptor.

The protein belongs to the RlmJ family. As to quaternary structure, monomer.

It carries out the reaction adenosine(2030) in 23S rRNA + S-adenosyl-L-methionine = N(6)-methyladenosine(2030) in 23S rRNA + S-adenosyl-L-homocysteine + H(+). In terms of biological role, specifically methylates the adenine in position 2030 of 23S rRNA. The protein is Ribosomal RNA large subunit methyltransferase J of Haemophilus influenzae (strain ATCC 51907 / DSM 11121 / KW20 / Rd).